Here is a 141-residue protein sequence, read N- to C-terminus: Lutropin subunit beta (141 aa).

Positions 1-20 (MEMLQGLLLWLLLSVAGVWA) are cleaved as a signal peptide. A Blocked amino end (Ser) modification is found at serine 21. Intrachain disulfides connect cysteine 29/cysteine 77, cysteine 43/cysteine 92, cysteine 46/cysteine 130, cysteine 54/cysteine 108, cysteine 58/cysteine 110, and cysteine 113/cysteine 120. Asparagine 33 is a glycosylation site (N-linked (GlcNAc...) asparagine).

The protein belongs to the glycoprotein hormones subunit beta family. Heterodimer of a common alpha chain and a unique beta chain which confers biological specificity to thyrotropin, lutropin, follitropin and gonadotropin.

It is found in the secreted. Functionally, promotes spermatogenesis and ovulation by stimulating the testes and ovaries to synthesize steroids. This Sus scrofa (Pig) protein is Lutropin subunit beta (LHB).